The primary structure comprises 314 residues: Lipoyl synthase (314 aa).

7 residues coordinate [4Fe-4S] cluster: Cys55, Cys60, Cys66, Cys81, Cys85, Cys88, and Ser292. A Radical SAM core domain is found at 67 to 281 (WEDREATFLI…TQYAEGLGFS (215 aa)).

It belongs to the radical SAM superfamily. Lipoyl synthase family. The cofactor is [4Fe-4S] cluster.

It localises to the cytoplasm. The catalysed reaction is [[Fe-S] cluster scaffold protein carrying a second [4Fe-4S](2+) cluster] + N(6)-octanoyl-L-lysyl-[protein] + 2 oxidized [2Fe-2S]-[ferredoxin] + 2 S-adenosyl-L-methionine + 4 H(+) = [[Fe-S] cluster scaffold protein] + N(6)-[(R)-dihydrolipoyl]-L-lysyl-[protein] + 4 Fe(3+) + 2 hydrogen sulfide + 2 5'-deoxyadenosine + 2 L-methionine + 2 reduced [2Fe-2S]-[ferredoxin]. Its pathway is protein modification; protein lipoylation via endogenous pathway; protein N(6)-(lipoyl)lysine from octanoyl-[acyl-carrier-protein]: step 2/2. Catalyzes the radical-mediated insertion of two sulfur atoms into the C-6 and C-8 positions of the octanoyl moiety bound to the lipoyl domains of lipoate-dependent enzymes, thereby converting the octanoylated domains into lipoylated derivatives. This chain is Lipoyl synthase, found in Mycobacterium leprae (strain Br4923).